The chain runs to 347 residues: tRNA N6-adenosine threonylcarbamoyltransferase (347 aa).

Positions 113 and 117 each coordinate Fe cation. Residues 136 to 140, Asp170, Gly183, Asp187, and Asn282 contribute to the substrate site; that span reads IVSGG. Position 310 (Asp310) interacts with Fe cation.

It belongs to the KAE1 / TsaD family. Fe(2+) is required as a cofactor.

It localises to the cytoplasm. It catalyses the reaction L-threonylcarbamoyladenylate + adenosine(37) in tRNA = N(6)-L-threonylcarbamoyladenosine(37) in tRNA + AMP + H(+). In terms of biological role, required for the formation of a threonylcarbamoyl group on adenosine at position 37 (t(6)A37) in tRNAs that read codons beginning with adenine. Is involved in the transfer of the threonylcarbamoyl moiety of threonylcarbamoyl-AMP (TC-AMP) to the N6 group of A37, together with TsaE and TsaB. TsaD likely plays a direct catalytic role in this reaction. In Bifidobacterium longum (strain NCC 2705), this protein is tRNA N6-adenosine threonylcarbamoyltransferase.